The following is a 562-amino-acid chain: Arginine--tRNA ligase (562 aa).

Residues 121–131 (PNIAKPISMGH) carry the 'HIGH' region motif.

The protein belongs to the class-I aminoacyl-tRNA synthetase family. As to quaternary structure, monomer.

Its subcellular location is the cytoplasm. It carries out the reaction tRNA(Arg) + L-arginine + ATP = L-arginyl-tRNA(Arg) + AMP + diphosphate. This is Arginine--tRNA ligase from Lactiplantibacillus plantarum (strain ATCC BAA-793 / NCIMB 8826 / WCFS1) (Lactobacillus plantarum).